Reading from the N-terminus, the 221-residue chain is uncharacterized protein (221 aa).

An N-terminal signal peptide occupies residues 1-26 (MVRLVPRAFAATVALLAAGFSPATAS).

This is an uncharacterized protein from Mycobacterium tuberculosis (strain ATCC 25618 / H37Rv).